Here is a 460-residue protein sequence, read N- to C-terminus: Ecdysteroid UDP-glucosyltransferase (460 aa).

The first 18 residues, 1–18 (MFISILLLALAVERILCA), serve as a signal peptide directing secretion.

The protein belongs to the UDP-glycosyltransferase family.

Functionally, catalyzes the transfer of glucose from UDP-glucose to ecdysteroids which are insect molting hormones. Expression of egt interferes with normal insect development and block molting. The polypeptide is Ecdysteroid UDP-glucosyltransferase (EGT) (Lacanobia oleracea granulosis virus (LoGV)).